Here is an 878-residue protein sequence, read N- to C-terminus: Leucine--tRNA ligase (878 aa).

The 'HIGH' region signature appears at 43–53 (PYPSGRIHMGH). Residues 630–634 (KMSKS) carry the 'KMSKS' region motif. ATP is bound at residue Lys633.

This sequence belongs to the class-I aminoacyl-tRNA synthetase family.

The protein localises to the cytoplasm. It carries out the reaction tRNA(Leu) + L-leucine + ATP = L-leucyl-tRNA(Leu) + AMP + diphosphate. This Rhodopseudomonas palustris (strain BisB5) protein is Leucine--tRNA ligase.